The sequence spans 224 residues: uncharacterized protein (224 aa).

A signal peptide spans 1–17 (MFTILLYFLVLFWVTNA).

This is an uncharacterized protein from Caenorhabditis elegans.